The sequence spans 1940 residues: Myosin-1B (1940 aa).

The Myosin N-terminal SH3-like domain maps to 33–82 (DAKSSVFVVHAKESYVKSTIQSKESGKVTVKTEGGETLTVKEDQIFSMNP). Positions 86 to 783 (DKIEDMAMMT…LLGLLEEMRD (698 aa)) constitute a Myosin motor domain. N6,N6,N6-trimethyllysine is present on lysine 130. 179 to 186 (GESGAGKT) serves as a coordination point for ATP. 2 actin-binding regions span residues 660–682 (LNKL…IPNE) and 762–776 (KFGH…GLLG). An IQ domain is found at 786–815 (LAQLITRTQARCRGFLMRVEFKKMMERRES). Positions 844–1940 (LLKSAESEKE…EIGKKAESEE (1097 aa)) form a coiled coil. The interval 1912–1940 (EERADIAESQVNKLRAKSREIGKKAESEE) is disordered. Basic and acidic residues predominate over residues 1928–1940 (KSREIGKKAESEE).

This sequence belongs to the TRAFAC class myosin-kinesin ATPase superfamily. Myosin family. Muscle myosin is a hexameric protein that consists of 2 heavy chain subunits (MHC), 2 alkali light chain subunits (MLC) and 2 regulatory light chain subunits (MLC-2).

Its subcellular location is the cytoplasm. The protein resides in the myofibril. Muscle contraction. The sequence is that of Myosin-1B (MYH1B) from Gallus gallus (Chicken).